A 155-amino-acid polypeptide reads, in one-letter code: NADH-ubiquinone oxidoreductase chain 6 (155 aa).

Transmembrane regions (helical) follow at residues 1–21 (MLGS…PLAF), 42–62 (WISL…FIYV), 71–91 (FAVD…SFLV), and 121–141 (LTML…LLVI).

This sequence belongs to the complex I subunit 6 family.

It localises to the mitochondrion membrane. It carries out the reaction a ubiquinone + NADH + 5 H(+)(in) = a ubiquinol + NAD(+) + 4 H(+)(out). In terms of biological role, core subunit of the mitochondrial membrane respiratory chain NADH dehydrogenase (Complex I) that is believed to belong to the minimal assembly required for catalysis. Complex I functions in the transfer of electrons from NADH to the respiratory chain. The immediate electron acceptor for the enzyme is believed to be ubiquinone. This Artemia franciscana (Brine shrimp) protein is NADH-ubiquinone oxidoreductase chain 6 (ND6).